A 311-amino-acid polypeptide reads, in one-letter code: Transcriptional regulatory protein MoaR1 (311 aa).

The segment at residues 15 to 117 is a DNA-binding region (ompR/PhoB-type); it reads LNATTAGAVQ…SEPPGYRLLI (103 aa).

Belongs to the AfsR/DnrI/RedD regulatory family.

Its function is as follows. Acts as a positive transcriptional regulator of the molybdopterin biosynthesis moa1 locus, promoting the expression of the moaA1B1C1D1 genes. Binds directly to the moaA1 promoter. The chain is Transcriptional regulatory protein MoaR1 (moaR1) from Mycobacterium tuberculosis (strain ATCC 25618 / H37Rv).